The chain runs to 227 residues: Orotidine 5'-phosphate decarboxylase (227 aa).

Substrate is bound by residues Asp8, Lys30, 59 to 68 (DLKLYDIPNT), Thr118, Arg178, Gln187, Gly207, and Arg208. Lys61 acts as the Proton donor in catalysis.

It belongs to the OMP decarboxylase family. Type 1 subfamily. Homodimer.

The enzyme catalyses orotidine 5'-phosphate + H(+) = UMP + CO2. It participates in pyrimidine metabolism; UMP biosynthesis via de novo pathway; UMP from orotate: step 2/2. Its function is as follows. Catalyzes the decarboxylation of orotidine 5'-monophosphate (OMP) to uridine 5'-monophosphate (UMP). This is Orotidine 5'-phosphate decarboxylase from Sulfurimonas denitrificans (strain ATCC 33889 / DSM 1251) (Thiomicrospira denitrificans (strain ATCC 33889 / DSM 1251)).